A 103-amino-acid polypeptide reads, in one-letter code: Histone H4 (103 aa).

The span at 1–14 (MSGRGKGGKGLGKG) shows a compositional bias: gly residues. The disordered stretch occupies residues 1–20 (MSGRGKGGKGLGKGGAKRHR). The DNA-binding element occupies 17–21 (KRHRK).

The protein belongs to the histone H4 family. The nucleosome is a histone octamer containing two molecules each of H2A, H2B, H3 and H4 assembled in one H3-H4 heterotetramer and two H2A-H2B heterodimers. The octamer wraps approximately 147 bp of DNA.

The protein resides in the nucleus. The protein localises to the chromosome. Functionally, core component of nucleosome. Nucleosomes wrap and compact DNA into chromatin, limiting DNA accessibility to the cellular machineries which require DNA as a template. Histones thereby play a central role in transcription regulation, DNA repair, DNA replication and chromosomal stability. DNA accessibility is regulated via a complex set of post-translational modifications of histones, also called histone code, and nucleosome remodeling. In Chlamydomonas reinhardtii (Chlamydomonas smithii), this protein is Histone H4 (H4-I).